A 90-amino-acid polypeptide reads, in one-letter code: Probable Fe(2+)-trafficking protein (90 aa).

Belongs to the Fe(2+)-trafficking protein family.

In terms of biological role, could be a mediator in iron transactions between iron acquisition and iron-requiring processes, such as synthesis and/or repair of Fe-S clusters in biosynthetic enzymes. In Aliivibrio salmonicida (strain LFI1238) (Vibrio salmonicida (strain LFI1238)), this protein is Probable Fe(2+)-trafficking protein.